The following is a 362-amino-acid chain: P2Y purinoceptor 1 (362 aa).

The Extracellular segment spans residues 1–40; sequence MTEALISAALNGTQPELLAGGWAAGNASTKCSLTKTGFQF. N-linked (GlcNAc...) asparagine glycosylation is found at Asn11 and Asn26. Disulfide bonds link Cys31-Cys285 and Cys113-Cys191. ADP is bound at residue Lys35. The helical transmembrane segment at 41–63 threads the bilayer; it reads YYLPTVYILVFITGFLGNSVAIW. The Cytoplasmic portion of the chain corresponds to 64 to 76; the sequence is MFVFHMRPWSGIS. A helical transmembrane segment spans residues 77-98; sequence VYMFNLALADFLYVLTLPALIF. The Extracellular segment spans residues 99-114; that stretch reads YYFNKTDWIFGDVMCK. N-linked (GlcNAc...) asparagine glycosylation occurs at Asn102. A helical membrane pass occupies residues 115–136; it reads LQRFIFHVNLYGSILFLTCISV. The Cytoplasmic segment spans residues 137 to 155; it reads HRYTGVVHPLKSLGRLKKK. Residues 156–177 form a helical membrane-spanning segment; sequence NAVYVSSLVWALVVAVIAPILF. Over 178–203 the chain is Extracellular; the sequence is YSGTGVRRNKTITCYDTTADEYLRSY. N-linked (GlcNAc...) asparagine glycosylation is present at Asn186. Residue 192-194 coordinates ADP; the sequence is YDT. A helical membrane pass occupies residues 204–226; that stretch reads FVYSMCTTVFMFCIPFIVILGCY. Residues 227 to 249 lie on the Cytoplasmic side of the membrane; the sequence is GLIVKALIYKDLDNSPLRRKSIY. Residues 250 to 273 form a helical membrane-spanning segment; that stretch reads LVIIVLTVFAVSYLPFHVMKTLNL. Residues 272–276, 292–295, and Arg299 each bind ADP; these read NLRAR and YATY. Residues 274 to 292 lie on the Extracellular side of the membrane; the sequence is RARLDFQTPQMCAFNDKVY. The chain crosses the membrane as a helical span at residues 293–314; sequence ATYQVTRGLASLNSCVDPILYF. Residues 315–362 are Cytoplasmic-facing; the sequence is LAGDTFRRRLSRATRKSSRRSEPNVQSKSEEMTLNILTEYKQNGDTSL.

Belongs to the G-protein coupled receptor 1 family. As to expression, mainly found in blood, brain, and lung. To a lesser extent in stomach, gut and skeletal muscle.

Its subcellular location is the cell membrane. Its function is as follows. Receptor for extracellular adenine nucleotides such as ADP. In platelets, binding to ADP leads to mobilization of intracellular calcium ions via activation of phospholipase C, a change in platelet shape, and ultimately platelet aggregation. The protein is P2Y purinoceptor 1 (P2RY1) of Meleagris gallopavo (Wild turkey).